The primary structure comprises 242 residues: Large ribosomal subunit protein uL1 (242 aa).

This sequence belongs to the universal ribosomal protein uL1 family. In terms of assembly, part of the 50S ribosomal subunit.

In terms of biological role, binds directly to 23S rRNA. The L1 stalk is quite mobile in the ribosome, and is involved in E site tRNA release. Protein L1 is also a translational repressor protein, it controls the translation of the L11 operon by binding to its mRNA. The sequence is that of Large ribosomal subunit protein uL1 from Streptomyces sp. (strain FRI-5).